The following is a 253-amino-acid chain: Tabinhibitin 3 (253 aa).

The first 22 residues, 1–22, serve as a signal peptide directing secretion; it reads MTLKRIFCAALALIVLQSVASA. In terms of domain architecture, SCP spans 66 to 209; sequence LQKTNWLRGV…LKRALFTCNF (144 aa). Positions 222–224 match the Cell attachment site motif; sequence RGD.

The protein belongs to the CRISP family. As to expression, expressed in salivary glands.

Its subcellular location is the secreted. In terms of biological role, inhibits platelet aggregation induced by all agonists tested (ADP, arachidonic acid, the thromboxane A2 analog U46619, thrombin, and snake venom snaclecs (TMVA that activates platelet through GPIB, and stejnulxin that specifically acts through GPVI (GP6))). May act by competing with fibrinogen for binding to glycoprotein IIb/IIIa (ITGA2B/ITGB3). The chain is Tabinhibitin 3 from Tabanus yao (Horsefly).